We begin with the raw amino-acid sequence, 538 residues long: MFS-type transporter oryC (538 aa).

The next 6 membrane-spanning stretches (helical) occupy residues 14–34 (LTGGWLTFWVTVACATDMSLF), 67–87 (TVTAIYDVGCFFGAIVAFTIG), 96–116 (ILLGTTIMAIGAVLQAASFSL), 120–140 (FVGRIILGIGNGINTATAPIW), 162–182 (IFGFCLVNWINYGLSFVGGSI), and 186–206 (FPLAFQFFFLIILWSTTPWLP). Asparagine 268 is a glycosylation site (N-linked (GlcNAc...) asparagine). The next 6 membrane-spanning stretches (helical) occupy residues 288–308 (FGGINIMSYYLPTVLMDSVGL), 315–335 (LLAACNALSYLVFSGLAVLLV), 342–362 (GLMLLSTFGQFLCFLIITILL), 379–399 (VAFFFLYYGAFGIGMLGVPWL), 416–436 (VATATDWITNFVVVEITPIGI), and 443–463 (FWIVWTVTNAAFLPILYFLYP). Residue asparagine 467 is glycosylated (N-linked (GlcNAc...) asparagine).

The protein belongs to the major facilitator superfamily. Sugar transporter (TC 2.A.1.1) family.

It is found in the membrane. Its function is as follows. MFS-type transporter; part of the gene cluster that mediates the biosynthesis of oryzines, natural products with an unusual maleidride backbone. The chain is MFS-type transporter oryC from Aspergillus oryzae (strain ATCC 42149 / RIB 40) (Yellow koji mold).